A 425-amino-acid chain; its full sequence is Monoacylglycerol lipase ABHD2 (425 aa).

The Cytoplasmic segment spans residues 1–9 (MNAMLETPE). Residues 10–30 (LPAVFDGVKLAAVAAVLYVIV) traverse the membrane as a helical; Signal-anchor for type II membrane protein segment. The Extracellular segment spans residues 31–425 (RCLNLKSPTA…DTEQVEADLE (395 aa)). The AB hydrolase-1 domain maps to 128–382 (MVICPGIANH…HGGHLGFFEG (255 aa)). An N-linked (GlcNAc...) asparagine glycan is attached at Asn-136. Catalysis depends on Ser-207, which acts as the Nucleophile. Active-site charge relay system residues include Asp-345 and His-376.

This sequence belongs to the AB hydrolase superfamily. AB hydrolase 4 family. Present in sperm (at protein level).

It localises to the cell projection. It is found in the cilium. Its subcellular location is the flagellum membrane. The protein localises to the cell membrane. It carries out the reaction an acetyl ester + H2O = an aliphatic alcohol + acetate + H(+). The enzyme catalyses Hydrolyzes glycerol monoesters of long-chain fatty acids.. The catalysed reaction is a triacylglycerol + H2O = a diacylglycerol + a fatty acid + H(+). It catalyses the reaction 2-(5Z,8Z,11Z,14Z-eicosatetraenoyl)-glycerol + H2O = glycerol + (5Z,8Z,11Z,14Z)-eicosatetraenoate + H(+). It carries out the reaction a butanoate ester + H2O = an aliphatic alcohol + butanoate + H(+). The enzyme catalyses hexadecanoate ester + H2O = an aliphatic alcohol + hexadecanoate + H(+). With respect to regulation, acylglycerol lipase activity is activated upon binding to progesterone. Progesterone-dependent acylglycerol lipase that catalyzes hydrolysis of endocannabinoid arachidonoylglycerol (AG) from cell membrane. Acts as a progesterone receptor: progesterone-binding activates the acylglycerol lipase activity, mediating degradation of 1-arachidonoylglycerol (1AG) and 2-arachidonoylglycerol (2AG) to glycerol and arachidonic acid (AA). Also displays an ester hydrolase activity against acetyl ester, butanoate ester and hexadecanoate ester. Plays a key role in sperm capacitation in response to progesterone by mediating degradation of 2AG, an inhibitor of the sperm calcium channel CatSper, leading to calcium influx via CatSper and sperm activation. May also play a role in smooth muscle cells migration. This Homo sapiens (Human) protein is Monoacylglycerol lipase ABHD2.